We begin with the raw amino-acid sequence, 170 residues long: Lipoprotein signal peptidase (170 aa).

3 helical membrane passes run 9-29, 72-92, and 95-117; these read FNIFVFVISLIFFDQLSKYLV, IFFIAMPIFILIFVFSLALKE, and CITRISLLLIFSGGVGNIIDRLF. Catalysis depends on residues D124 and D146. A helical transmembrane segment spans residues 143–163; sequence NFADSYVVIGMILFLVYDFFI.

This sequence belongs to the peptidase A8 family.

It localises to the cell inner membrane. It carries out the reaction Release of signal peptides from bacterial membrane prolipoproteins. Hydrolyzes -Xaa-Yaa-Zaa-|-(S,diacylglyceryl)Cys-, in which Xaa is hydrophobic (preferably Leu), and Yaa (Ala or Ser) and Zaa (Gly or Ala) have small, neutral side chains.. It participates in protein modification; lipoprotein biosynthesis (signal peptide cleavage). Functionally, this protein specifically catalyzes the removal of signal peptides from prolipoproteins. This chain is Lipoprotein signal peptidase, found in Borrelia garinii subsp. bavariensis (strain ATCC BAA-2496 / DSM 23469 / PBi) (Borreliella bavariensis).